The following is a 300-amino-acid chain: Ubiquinone biosynthesis protein COQ4, mitochondrial (300 aa).

The Zn(2+) site is built by His-173, Asp-174, His-177, and Glu-189.

The protein belongs to the COQ4 family. Component of a multi-subunit COQ enzyme complex, composed of at least COQ3, COQ4, COQ5, COQ6, COQ7 and COQ9. Zn(2+) is required as a cofactor.

It is found in the mitochondrion inner membrane. The enzyme catalyses a 4-hydroxy-3-methoxy-5-(all-trans-polyprenyl)benzoate + H(+) = a 2-methoxy-6-(all-trans-polyprenyl)phenol + CO2. It functions in the pathway cofactor biosynthesis; ubiquinone biosynthesis. In terms of biological role, lyase that catalyzes the C1-decarboxylation of 4-hydroxy-3-methoxy-5-(all-trans-polyprenyl)benzoic acid into 2-methoxy-6-(all-trans-polyprenyl)phenol during ubiquinone biosynthesis. The polypeptide is Ubiquinone biosynthesis protein COQ4, mitochondrial (Cryptococcus neoformans var. neoformans serotype D (strain B-3501A) (Filobasidiella neoformans)).